Here is an 85-residue protein sequence, read N- to C-terminus: High-potential iron-sulfur protein (85 aa).

[4Fe-4S] cluster-binding residues include C43, C46, C63, and C77.

The protein belongs to the high-potential iron-sulfur protein (HiPIP) family. As to quaternary structure, homodimer.

The protein localises to the periplasm. Specific class of high-redox-potential 4Fe-4S ferredoxins. Functions in anaerobic electron transport in most purple and in some other photosynthetic bacteria and in at least one genus (Paracoccus) of halophilic, denitrifying bacteria. This Allochromatium warmingii (Chromatium warmingii) protein is High-potential iron-sulfur protein.